Reading from the N-terminus, the 934-residue chain is Serine/threonine-protein kinase PknD (934 aa).

In terms of domain architecture, Protein kinase spans Tyr-4–Leu-296. ATP contacts are provided by residues Ile-10 to Val-18 and Lys-33. The active-site Proton acceptor is the Asp-138.

Belongs to the protein kinase superfamily. Ser/Thr protein kinase family. Post-translationally, autophosphorylated on serine and threonine residues.

It carries out the reaction L-seryl-[protein] + ATP = O-phospho-L-seryl-[protein] + ADP + H(+). It catalyses the reaction L-threonyl-[protein] + ATP = O-phospho-L-threonyl-[protein] + ADP + H(+). Functionally, together with the serine/threonine kinase Pkn1, may play a role in the specific interactions with host proteins during intracellular growth. This Chlamydia trachomatis serovar A (strain ATCC VR-571B / DSM 19440 / HAR-13) protein is Serine/threonine-protein kinase PknD.